Here is a 637-residue protein sequence, read N- to C-terminus: Probable potassium transport system protein Kup 2 (637 aa).

A disordered region spans residues 1–21 (MDLASRDSEAETVEQSSHSGA). Helical transmembrane passes span 29–49 (LMLGALGVVYGDIGTSPIYAF), 68–88 (VLSLIVWALTIIVTIKYVAFV), 116–136 (LILAIGLCGAALFFGDSIITP), 150–170 (VTPTLDPYVVPITLLILAILF), 180–200 (VAAVFGPVTALWFLAIGVAGL), 228–248 (AAFVTVGAVFLAVTGAEALYV), 258–278 (IVLAWFSVVFPCLLLNYFGQG), 300–320 (ALMPMVGLATAATVIASQAVI), 359–379 (LLVALGVMLLVVGFGSSSSLA), 381–401 (AYGISVTGEMLMTTILLFVVM), 409–429 (LAVALPLTLLFGIIDSGFFLA), and 434–454 (IFEGGWVSITVACLMGLIMWT).

It belongs to the HAK/KUP transporter (TC 2.A.72) family.

The protein localises to the cell inner membrane. The catalysed reaction is K(+)(in) + H(+)(in) = K(+)(out) + H(+)(out). Its function is as follows. Transport of potassium into the cell. Likely operates as a K(+):H(+) symporter. This is Probable potassium transport system protein Kup 2 from Mesorhizobium japonicum (strain LMG 29417 / CECT 9101 / MAFF 303099) (Mesorhizobium loti (strain MAFF 303099)).